Reading from the N-terminus, the 161-residue chain is Large-conductance mechanosensitive channel (161 aa).

2 consecutive transmembrane segments (helical) span residues 14 to 34 and 85 to 105; these read VVDM…VNTL and GLFL…FILV.

This sequence belongs to the MscL family. Homopentamer.

The protein resides in the cell inner membrane. In terms of biological role, channel that opens in response to stretch forces in the membrane lipid bilayer. May participate in the regulation of osmotic pressure changes within the cell. This chain is Large-conductance mechanosensitive channel, found in Chlorobium luteolum (strain DSM 273 / BCRC 81028 / 2530) (Pelodictyon luteolum).